A 506-amino-acid polypeptide reads, in one-letter code: MEFHESSPFVFITRGFIFIAISIAVLRRIISKKTKTLPPGPWKLPLIGNLHQFLGSVPYQILRDLAQKNGPLMHLQLGEVSAIVAASPQMAKEITKTLDLQFADRPVIQALRIVTYDYLDISFNAYGKYWRQLRKIFVQELLTSKRVRSFCSIREDEFSNLVKTINSANGKSINLSKLMTSCTNSIINKVAFGKVRYEREVFIDLINQILALAGGFKLVDLFPSYKILHVLEGTERKLWEIRGKIDKILDKVIDEHRENSSRTGKGNGCNGQEDIVDILLRIEEGGDLDLDIPFGNNNIKALLFDIIAGGTETSSTAVDWAMSEMMRNPHVMSKAQKEIREAFNGKEKIEENDIQNLKYLKLVIQETLRLHPPAPLLMRQCREKCEIGGYHIPVGTKAFINVWAIGRDPAYWPNPESFIPERFDDNTYEFTKSEHHAFEYLPFGAGRRMCPGISFGLANVELPLALLLYHFNWQLPDGSTTLDMTEATGLAARRKYDLQLIATSYA.

Residues 1 to 5 lie on the Lumenal side of the membrane; that stretch reads MEFHE. A helical transmembrane segment spans residues 6-26; that stretch reads SSPFVFITRGFIFIAISIAVL. The Cytoplasmic portion of the chain corresponds to 27–506; that stretch reads RRIISKKTKT…DLQLIATSYA (480 aa). A heme-binding site is contributed by C450.

It belongs to the cytochrome P450 family. It depends on heme as a cofactor. In terms of tissue distribution, expressed in leaf epidermis.

Its subcellular location is the endoplasmic reticulum membrane. It catalyses the reaction 16-methoxytabersonine + reduced [NADPH--hemoprotein reductase] + O2 = (3R)-1,2-didehydro-3-hydroxy-16-methoxy-2,3-dihydrotabersonine + oxidized [NADPH--hemoprotein reductase] + H2O + H(+). The catalysed reaction is (-)-tabersonine + reduced [NADPH--hemoprotein reductase] + O2 = (3R)-1,2-didehydro-3-hydroxy-2,3-dihydrotabersonine + oxidized [NADPH--hemoprotein reductase] + H2O + H(+). Its pathway is alkaloid biosynthesis; vindoline biosynthesis. Functionally, cytochrome P450 catalyzing the monooxygenation of 16-methoxytabersonine, 16-hydroxytabersonine and tabersonine, but not of 2,3-dihydrotabersonine. Converts the C2,C3 alkene of tabersonine and 16-methoxytabersonine to the epoxides, which then spontaneously open to form the corresponding imine alcohols. Inactive in converting amyrin to ursolic acid. In Catharanthus roseus (Madagascar periwinkle), this protein is Tabersonine 3-oxygenase.